The sequence spans 397 residues: Neuroplastin (397 aa).

Positions 1–28 are cleaved as a signal peptide; sequence MSGSSLPGALALSLLLVSGSLLPGPGAA. 3 Ig-like domains span residues 29-134, 148-234, and 237-327; these read QNAG…PSIT, PRIV…IEVK, and PDIT…ASVS. At 29–338 the chain is on the extracellular side; the sequence is QNAGFVKSPM…VLRVRSHLAP (310 aa). C52 and C116 are joined by a disulfide. The interval 149–161 is narpin; mediates binding with FGFR1 and has antidepressant-like activity; sequence RIVTSEEVIIRES. An intrachain disulfide couples C169 to C217. Residues N170, N196, N228, N283, N295, and N316 are each glycosylated (N-linked (GlcNAc...) asparagine). A disulfide bond links C258 and C315. A helical membrane pass occupies residues 339–359; the sequence is LWPFLGILAEIIILVVIIVVY. Residues 360–397 are Cytoplasmic-facing; sequence EKRKRPDEVPDDDEPAGPMKTNSTNNHKDKNLRQRNTN. Residues 364-397 form a disordered region; that stretch reads RPDEVPDDDEPAGPMKTNSTNNHKDKNLRQRNTN.

In terms of assembly, interacts with ATP2B1; this interaction stabilizes ATP2B1 and increases ATPase activity; this interaction controls T cell calcium homeostasis following T cell activation. Interacts with XKR8; promoting its localization at the cell membrane. N-glycosylated. Isoform 1 and isoform 2 are widely expressed with variable levels in brain. Isoform 1 is expressed in cerebellum and midbrain. Isoform 1 and isoform 2 are expressed in cerebral cortex, hippocampus and striatum. Isoform 2 is more abundant in the cerebral cortex than isoform 1.

The protein resides in the cell membrane. Its subcellular location is the postsynaptic density. Its function is as follows. Probable homophilic and heterophilic cell adhesion molecule involved in long term potentiation at hippocampal excitatory synapses through activation of p38MAPK. May also regulate neurite outgrowth by activating the FGFR1 signaling pathway. May play a role in synaptic plasticity. Also acts as a chaperone for ATP2B1; stabilizes ATP2B1 and increases its ATPase activity. Promotes localization of XKR8 at the cell membrane. This chain is Neuroplastin (Nptn), found in Mus musculus (Mouse).